The following is a 471-amino-acid chain: 3-isopropylmalate dehydratase large subunit (471 aa).

Residues cysteine 347, cysteine 407, and cysteine 410 each coordinate [4Fe-4S] cluster.

This sequence belongs to the aconitase/IPM isomerase family. LeuC type 1 subfamily. Heterodimer of LeuC and LeuD. The cofactor is [4Fe-4S] cluster.

It catalyses the reaction (2R,3S)-3-isopropylmalate = (2S)-2-isopropylmalate. The protein operates within amino-acid biosynthesis; L-leucine biosynthesis; L-leucine from 3-methyl-2-oxobutanoate: step 2/4. Catalyzes the isomerization between 2-isopropylmalate and 3-isopropylmalate, via the formation of 2-isopropylmaleate. In Prochlorococcus marinus (strain MIT 9211), this protein is 3-isopropylmalate dehydratase large subunit.